A 405-amino-acid polypeptide reads, in one-letter code: Tryptophan synthase beta chain (405 aa).

Lysine 98 carries the N6-(pyridoxal phosphate)lysine modification.

This sequence belongs to the TrpB family. Tetramer of two alpha and two beta chains. The cofactor is pyridoxal 5'-phosphate.

The catalysed reaction is (1S,2R)-1-C-(indol-3-yl)glycerol 3-phosphate + L-serine = D-glyceraldehyde 3-phosphate + L-tryptophan + H2O. The protein operates within amino-acid biosynthesis; L-tryptophan biosynthesis; L-tryptophan from chorismate: step 5/5. In terms of biological role, the beta subunit is responsible for the synthesis of L-tryptophan from indole and L-serine. The polypeptide is Tryptophan synthase beta chain (trpB) (Xylella fastidiosa (strain 9a5c)).